The following is a 2768-amino-acid chain: Thyroglobulin (2768 aa).

The signal sequence occupies residues 1–19 (MALVLEIFTLLASICWVSA). At tyrosine 24 the chain carries Iodotyrosine; alternate. Tyrosine 24 bears the Sulfotyrosine; alternate mark. Thyroxine; alternate is present on tyrosine 24. At tyrosine 24 the chain carries Triiodothyronine; alternate. Thyroglobulin type-1 domains follow at residues 31–92 (LRPC…PVAC), 93–160 (LSFC…PKRC), 161–297 (PRSC…RFRC), and 298–358 (PTKC…PPSC). 18 cysteine pairs are disulfide-bonded: cysteine 34–cysteine 52, cysteine 63–cysteine 70, cysteine 72–cysteine 92, cysteine 96–cysteine 120, cysteine 131–cysteine 138, cysteine 140–cysteine 160, cysteine 164–cysteine 183, cysteine 194–cysteine 235, cysteine 237–cysteine 297, cysteine 301–cysteine 319, cysteine 330–cysteine 336, cysteine 338–cysteine 358, cysteine 364–cysteine 620, cysteine 408–cysteine 608, cysteine 631–cysteine 636, cysteine 638–cysteine 658, cysteine 662–cysteine 687, and cysteine 698–cysteine 703. N-linked (GlcNAc...) asparagine glycosylation occurs at asparagine 76. An Iodotyrosine modification is found at tyrosine 108. Asparagine 110 is a glycosylation site (N-linked (GlcNAc...) asparagine). The residue at position 149 (tyrosine 149) is an Iodotyrosine; alternate. Position 149 is a diiodotyrosine; alternate (tyrosine 149). Asparagine 198 carries N-linked (GlcNAc...) asparagine glycosylation. 2 positions are modified to iodotyrosine: tyrosine 234 and tyrosine 258. Asparagine 484 and asparagine 529 each carry an N-linked (GlcNAc...) asparagine glycan. The tract at residues 521–545 (PLSVGLDSNSSTGTPEAAKKDGTMN) is disordered. Thyroglobulin type-1 domains are found at residues 605–658 (SQTC…QPRC), 659–726 (PTDC…PKKC), 727–921 (PTPC…LPTC), 922–1073 (PGSC…IPQC), 1074–1145 (PTTC…SAQC), and 1146–1210 (PSLC…QPAC). Tyrosine 704 is subject to Iodotyrosine; alternate. Tyrosine 704 is modified (thyroxine; alternate). Position 704 is a triiodothyronine; alternate (tyrosine 704). Tyrosine 704 is subject to Diiodotyrosine; alternate. 16 cysteine pairs are disulfide-bonded: cysteine 705–cysteine 726, cysteine 730–cysteine 763, cysteine 774–cysteine 898, cysteine 900–cysteine 921, cysteine 925–cysteine 1031, cysteine 1042–cysteine 1049, cysteine 1051–cysteine 1073, cysteine 1077–cysteine 1108, cysteine 1126–cysteine 1145, cysteine 1149–cysteine 1169, cysteine 1181–cysteine 1188, cysteine 1190–cysteine 1210, cysteine 1215–cysteine 1264, cysteine 1231–cysteine 1245, cysteine 1306–cysteine 1356, and cysteine 1331–cysteine 1347. N-linked (GlcNAc...) asparagine glycosylation is present at asparagine 748. Residue tyrosine 785 is modified to Iodotyrosine. A glycan (N-linked (GlcNAc...) asparagine) is linked at asparagine 816. Tyrosine 866 carries the iodotyrosine; alternate modification. Residue tyrosine 866 is modified to Diiodotyrosine; alternate. At tyrosine 883 the chain carries Diiodotyrosine. An N-linked (GlcNAc...) asparagine glycan is attached at asparagine 947. Tyrosine 992 carries the iodotyrosine; alternate modification. Tyrosine 992 bears the Diiodotyrosine; alternate mark. Residue asparagine 1220 is glycosylated (N-linked (GlcNAc...) asparagine). Position 1310 is an iodotyrosine (tyrosine 1310). Tyrosine 1310 carries the thyroxine modification. Residues asparagine 1348, asparagine 1349, and asparagine 1365 are each glycosylated (N-linked (GlcNAc...) asparagine). Intrachain disulfides connect cysteine 1440/cysteine 1459, cysteine 1462/cysteine 1473, cysteine 1476/cysteine 1490, cysteine 1493/cysteine 1510, cysteine 1514/cysteine 1523, cysteine 1543/cysteine 1565, cysteine 1603/cysteine 1627, cysteine 1607/cysteine 1613, and cysteine 1639/cysteine 1662. Type II repeat units follow at residues 1456–1469 (GLGC…SYSQ), 1470–1486 (DEEC…EQAG), and 1487–1503 (SLAC…ISAG). Iodotyrosine; alternate is present on tyrosine 1467. Diiodotyrosine; alternate is present on tyrosine 1467. The Thyroglobulin type-1 11 domain occupies 1511-1565 (VTDCQRNEAGLQCDQNGQYRASQKDRGSGKAFCVDGEGRRLPWWETEAPLEDSQC). A Type IIIA repeat occupies 1603–1723 (CLTDCTEDEA…GANLTDAHLF (121 aa)). Asparagine 1716 carries an N-linked (GlcNAc...) asparagine glycan. 4 disulfides stabilise this stretch: cysteine 1724/cysteine 1749, cysteine 1728/cysteine 1734, cysteine 1733/cysteine 1835, and cysteine 1760/cysteine 1777. One copy of the Type IIIB repeat lies at 1724 to 1892 (CLLACDRDLC…LFSAQQANLW (169 aa)). Residues asparagine 1774 and asparagine 1869 are each glycosylated (N-linked (GlcNAc...) asparagine). Cystine bridges form between cysteine 1893-cysteine 1919, cysteine 1897-cysteine 1904, cysteine 1928-cysteine 1939, cysteine 1996-cysteine 2024, cysteine 2000-cysteine 2006, cysteine 2005-cysteine 2076, and cysteine 2035-cysteine 2048. A Type IIIA repeat occupies 1893 to 1995 (CLSRCVQEHS…EKSISNGFFE (103 aa)). The Type IIIB repeat unit spans residues 1996–2129 (CERRCDADPC…TSNFSAVRDL (134 aa)). Asparagine 2013 carries N-linked (GlcNAc...) asparagine glycosylation. An N-linked (GlcNAc...) asparagine glycan is attached at asparagine 2122. 3 disulfide bridges follow: cysteine 2130/cysteine 2154, cysteine 2134/cysteine 2140, and cysteine 2163/cysteine 2172. The Type IIIA repeat unit spans residues 2130-2187 (CLSECSQHEACLITTLQTQPGAVRCMFYADTQSCTHSLQGQNCRLLLREEATHIYRKP). Tyrosine 2184 carries the iodotyrosine modification. The segment at 2188–2768 (GISLLSYEAS…QEPGSKTYSK (581 aa)) is cholinesterase-like (ChEL). Asparagine 2250 is a glycosylation site (N-linked (GlcNAc...) asparagine). The cysteines at positions 2264 and 2281 are disulfide-linked. An N-linked (GlcNAc...) asparagine glycan is attached at asparagine 2295. A disulfide bridge connects residues cysteine 2442 and cysteine 2453. The residue at position 2540 (tyrosine 2540) is an Iodotyrosine. At tyrosine 2573 the chain carries Iodotyrosine; alternate. Residue tyrosine 2573 is modified to Thyroxine; alternate. At tyrosine 2573 the chain carries Triiodothyronine; alternate. At tyrosine 2573 the chain carries Diiodotyrosine; alternate. N-linked (GlcNAc...) asparagine glycosylation occurs at asparagine 2582. 2 positions are modified to iodotyrosine: tyrosine 2587 and tyrosine 2617. Cysteine 2591 and cysteine 2715 are disulfide-bonded. At tyrosine 2697 the chain carries Diiodotyrosine. The segment at 2727-2768 (TSADGAKGGQSAESEEEELTAGSGLREDLLSLQEPGSKTYSK) is disordered. Serine 2749 is a glycosylation site (O-linked (Xyl...) (chondroitin sulfate) serine). Position 2766 is an iodotyrosine; alternate (tyrosine 2766). Tyrosine 2766 carries the thyroxine; alternate modification. A Triiodothyronine; alternate modification is found at tyrosine 2766. Tyrosine 2766 is modified (diiodotyrosine; alternate).

Belongs to the type-B carboxylesterase/lipase family. As to quaternary structure, monomer. Homodimer (via ChEL region); occurs in the endoplasmic reticulum and is required for export to the Golgi apparatus. Homooligomer; disulfide-linked; stored in this form in the thyroid follicle lumen. In terms of processing, iodinated on tyrosine residues by TPO. There are 4 pairs of iodinated tyrosines used for coupling: acceptor Tyr-24 is coupled to donor Tyr-149 or Tyr-234, acceptor Tyr-2573 is coupled to donor Tyr-2540, acceptor Tyr-2766 in monomer 1 is coupled to donor Tyr-2766 in monomer 2 and acceptor Tyr-1310 in monomer 1 is coupled to donor Tyr-108 in monomer 2. Post-translationally, sulfated tyrosines are desulfated during iodination. Undergoes sequential proteolysis by cathepsins to release thyroxine (T4) and triiodothyronine (T3) hormones. In the thyroid follicle lumen, cross-linked TG (storage form) is solubilized by limited proteolysis mediated by cathepsins CTSB and/or CTSL. Partially cleaved TG is further processed by CTSK/cathepsin K and/or CTSL resulting in the release of T4. Following endocytosis, further processing occurs leading to the release of T3 and more T4 hormones. As to expression, specifically expressed in the thyroid gland.

The protein localises to the secreted. Functionally, acts as a substrate for the production of iodinated thyroid hormones thyroxine (T4) and triiodothyronine (T3). The synthesis of T3 and T4 involves iodination of selected tyrosine residues of TG/thyroglobulin followed by their oxidative coupling in the thyroid follicle lumen. Following TG re-internalization and lysosomal-mediated proteolysis, T3 and T4 are released from the polypeptide backbone leading to their secretion into the bloodstream. One dimer produces 7 thyroid hormone molecules. This is Thyroglobulin from Homo sapiens (Human).